Reading from the N-terminus, the 644-residue chain is ATP-dependent zinc metalloprotease FtsH (644 aa).

Residues 1-13 are Cytoplasmic-facing; sequence MANNDNKHRRSMS. Residues 14-34 form a helical membrane-spanning segment; sequence MLLYIAVAIFVYLLLSNTLLP. The Extracellular segment spans residues 35 to 117; it reads GLLRQQIQTV…SIPDNSANML (83 aa). Residues 118-138 traverse the membrane as a helical segment; sequence MYALIQYGIPLIIFLGIGFFI. Topologically, residues 139 to 644 are cytoplasmic; the sequence is NRSLKRAMGD…DEGSSTPSEE (506 aa). 224-231 is an ATP binding site; that stretch reads GPPGTGKT. Residue His-445 coordinates Zn(2+). Glu-446 is an active-site residue. His-449 and Asp-522 together coordinate Zn(2+).

This sequence in the central section; belongs to the AAA ATPase family. It in the C-terminal section; belongs to the peptidase M41 family. Homohexamer. Zn(2+) serves as cofactor.

It is found in the cell membrane. Its function is as follows. Acts as a processive, ATP-dependent zinc metallopeptidase for both cytoplasmic and membrane proteins. Plays a role in the quality control of integral membrane proteins. The chain is ATP-dependent zinc metalloprotease FtsH from Lancefieldella parvula (strain ATCC 33793 / DSM 20469 / CCUG 32760 / JCM 10300 / KCTC 3663 / VPI 0546 / 1246) (Atopobium parvulum).